We begin with the raw amino-acid sequence, 159 residues long: Deoxyuridine 5'-triphosphate nucleotidohydrolase (159 aa).

Residues 78–80 (RSG), asparagine 91, 95–97 (LID), and methionine 105 each bind substrate.

It belongs to the dUTPase family. Mg(2+) serves as cofactor.

The catalysed reaction is dUTP + H2O = dUMP + diphosphate + H(+). Its pathway is pyrimidine metabolism; dUMP biosynthesis; dUMP from dCTP (dUTP route): step 2/2. Functionally, this enzyme is involved in nucleotide metabolism: it produces dUMP, the immediate precursor of thymidine nucleotides and it decreases the intracellular concentration of dUTP so that uracil cannot be incorporated into DNA. The polypeptide is Deoxyuridine 5'-triphosphate nucleotidohydrolase (Buchnera aphidicola subsp. Schizaphis graminum (strain Sg)).